Reading from the N-terminus, the 243-residue chain is Orotidine 5'-phosphate decarboxylase (243 aa).

Residues D18, K39, 66–75, T130, R192, Q201, G221, and R222 each bind substrate; that span reads DLKFHDIPTT. K68 acts as the Proton donor in catalysis.

The protein belongs to the OMP decarboxylase family. Type 1 subfamily. As to quaternary structure, homodimer.

It catalyses the reaction orotidine 5'-phosphate + H(+) = UMP + CO2. It participates in pyrimidine metabolism; UMP biosynthesis via de novo pathway; UMP from orotate: step 2/2. In terms of biological role, catalyzes the decarboxylation of orotidine 5'-monophosphate (OMP) to uridine 5'-monophosphate (UMP). The sequence is that of Orotidine 5'-phosphate decarboxylase from Synechococcus sp. (strain CC9311).